The primary structure comprises 218 residues: Cytidylate kinase (218 aa).

10–18 provides a ligand contact to ATP; it reads GPAGSGKST.

Belongs to the cytidylate kinase family. Type 1 subfamily.

The protein localises to the cytoplasm. It catalyses the reaction CMP + ATP = CDP + ADP. The catalysed reaction is dCMP + ATP = dCDP + ADP. This chain is Cytidylate kinase, found in Fusobacterium nucleatum subsp. nucleatum (strain ATCC 25586 / DSM 15643 / BCRC 10681 / CIP 101130 / JCM 8532 / KCTC 2640 / LMG 13131 / VPI 4355).